A 156-amino-acid polypeptide reads, in one-letter code: Small ribosomal subunit protein uS7 (156 aa).

The protein belongs to the universal ribosomal protein uS7 family. Part of the 30S ribosomal subunit. Contacts proteins S9 and S11.

Functionally, one of the primary rRNA binding proteins, it binds directly to 16S rRNA where it nucleates assembly of the head domain of the 30S subunit. Is located at the subunit interface close to the decoding center, probably blocks exit of the E-site tRNA. In Paramagnetospirillum magneticum (strain ATCC 700264 / AMB-1) (Magnetospirillum magneticum), this protein is Small ribosomal subunit protein uS7.